Here is a 323-residue protein sequence, read N- to C-terminus: Queuosine 5'-phosphate N-glycosylase/hydrolase (323 aa).

Asn72, Tyr93, Lys199, Phe229, Asp231, Asp298, Trp302, and Gln306 together coordinate queuosine 5'-phosphate. Residue Asp231 is the Nucleophile or transition state stabilizer of the active site.

The protein belongs to the QNG1 protein family. As to quaternary structure, monomer.

It carries out the reaction queuosine 5'-phosphate + H2O = queuine + D-ribose 5-phosphate. Functionally, catalyzes the hydrolysis of queuosine 5'-phosphate, releasing the nucleobase queuine (q). Is likely required for salvage of queuine from exogenous queuosine (Q) that is imported and then converted to queuosine 5'-phosphate intracellularly. In vitro, can also catalyze the release of the q base directly from Q as substrate; however, Q may not be the biologically relevant substrate. Shows a very low activity on queuosine 3',5'-diphosphate, and cannot release q from queuosine 3'-phosphate and from the 5'-nucleotides AMP, UMP, CMP or GMP, indicating specificity for the queuine base. The polypeptide is Queuosine 5'-phosphate N-glycosylase/hydrolase (Sphaerobacter thermophilus (strain ATCC 49802 / DSM 20745 / KCCM 41009 / NCIMB 13125 / S 6022)).